Here is a 484-residue protein sequence, read N- to C-terminus: tRNA sulfurtransferase (484 aa).

The THUMP domain maps to 63–167; that stretch reads EAFGERLACI…NEQLYLVDKR (105 aa). ATP contacts are provided by residues 185–186, Lys-267, Gly-289, and Gln-298; that span reads LI. Cys-346 and Cys-458 are disulfide-bonded. The region spanning 406 to 484 is the Rhodanese domain; it reads ISADEVIIDV…GYSNVKVYRP (79 aa). Cys-458 serves as the catalytic Cysteine persulfide intermediate.

The protein belongs to the ThiI family.

The protein localises to the cytoplasm. The enzyme catalyses [ThiI sulfur-carrier protein]-S-sulfanyl-L-cysteine + a uridine in tRNA + 2 reduced [2Fe-2S]-[ferredoxin] + ATP + H(+) = [ThiI sulfur-carrier protein]-L-cysteine + a 4-thiouridine in tRNA + 2 oxidized [2Fe-2S]-[ferredoxin] + AMP + diphosphate. It catalyses the reaction [ThiS sulfur-carrier protein]-C-terminal Gly-Gly-AMP + S-sulfanyl-L-cysteinyl-[cysteine desulfurase] + AH2 = [ThiS sulfur-carrier protein]-C-terminal-Gly-aminoethanethioate + L-cysteinyl-[cysteine desulfurase] + A + AMP + 2 H(+). The protein operates within cofactor biosynthesis; thiamine diphosphate biosynthesis. In terms of biological role, catalyzes the ATP-dependent transfer of a sulfur to tRNA to produce 4-thiouridine in position 8 of tRNAs, which functions as a near-UV photosensor. Also catalyzes the transfer of sulfur to the sulfur carrier protein ThiS, forming ThiS-thiocarboxylate. This is a step in the synthesis of thiazole, in the thiamine biosynthesis pathway. The sulfur is donated as persulfide by IscS. This Shewanella piezotolerans (strain WP3 / JCM 13877) protein is tRNA sulfurtransferase.